The primary structure comprises 86 residues: Large ribosomal subunit protein bL31B (86 aa).

It belongs to the bacterial ribosomal protein bL31 family. Type B subfamily. Part of the 50S ribosomal subunit.

This Vibrio campbellii (strain ATCC BAA-1116) protein is Large ribosomal subunit protein bL31B.